Here is a 923-residue protein sequence, read N- to C-terminus: RNA polymerase-associated protein RapA (923 aa).

Residues 162–332 (EVGNRVNPRV…FARLRLLDPE (171 aa)) form the Helicase ATP-binding domain. Residue 175-182 (DEVGLGKT) coordinates ATP. The DEAH box motif lies at 278 to 281 (DEAH). In terms of domain architecture, Helicase C-terminal spans 443–597 (KIDWLIDFLK…TCPMGMALFS (155 aa)).

Belongs to the SNF2/RAD54 helicase family. RapA subfamily. Interacts with the RNAP. Has a higher affinity for the core RNAP than for the holoenzyme. Its ATPase activity is stimulated by binding to RNAP.

Functionally, transcription regulator that activates transcription by stimulating RNA polymerase (RNAP) recycling in case of stress conditions such as supercoiled DNA or high salt concentrations. Probably acts by releasing the RNAP, when it is trapped or immobilized on tightly supercoiled DNA. Does not activate transcription on linear DNA. Probably not involved in DNA repair. In Haemophilus influenzae (strain PittEE), this protein is RNA polymerase-associated protein RapA.